Here is a 754-residue protein sequence, read N- to C-terminus: 5-methyltetrahydropteroyltriglutamate--homocysteine methyltransferase (754 aa).

5-methyltetrahydropteroyltri-L-glutamate contacts are provided by residues 17-20 and lysine 117; that span reads RELK. Residues 431–433 and glutamate 484 each bind L-homocysteine; that span reads IGS. L-methionine contacts are provided by residues 431–433 and glutamate 484; that span reads IGS. Residues 515-516 and tryptophan 561 each bind 5-methyltetrahydropteroyltri-L-glutamate; that span reads RC. Position 599 (aspartate 599) interacts with L-homocysteine. Aspartate 599 provides a ligand contact to L-methionine. Glutamate 605 contacts 5-methyltetrahydropteroyltri-L-glutamate. 3 residues coordinate Zn(2+): histidine 641, cysteine 643, and glutamate 665. Histidine 694 functions as the Proton donor in the catalytic mechanism. Cysteine 726 provides a ligand contact to Zn(2+).

Belongs to the vitamin-B12 independent methionine synthase family. Zn(2+) is required as a cofactor.

It carries out the reaction 5-methyltetrahydropteroyltri-L-glutamate + L-homocysteine = tetrahydropteroyltri-L-glutamate + L-methionine. The protein operates within amino-acid biosynthesis; L-methionine biosynthesis via de novo pathway; L-methionine from L-homocysteine (MetE route): step 1/1. Its function is as follows. Catalyzes the transfer of a methyl group from 5-methyltetrahydrofolate to homocysteine resulting in methionine formation. The chain is 5-methyltetrahydropteroyltriglutamate--homocysteine methyltransferase from Salmonella enteritidis PT4 (strain P125109).